The chain runs to 155 residues: Transcriptional repressor NrdR (155 aa).

A zinc finger spans residues 3 to 34 (CPFCHAEETKVVDSRLVADGAQVRRRRECLEC). An ATP-cone domain is found at 49–139 (PLIIKRDGRR…VYKRFKDVSD (91 aa)).

Belongs to the NrdR family. Zn(2+) is required as a cofactor.

Functionally, negatively regulates transcription of bacterial ribonucleotide reductase nrd genes and operons by binding to NrdR-boxes. The protein is Transcriptional repressor NrdR of Legionella pneumophila (strain Lens).